The sequence spans 233 residues: MVDIVVTGLSANSVPYIEALERQRALHADVVAGRAQDTVILLEHPSVYTAGRRTEPEDRPRDGTPVIDVDRGGRITWHGPGQLVGYPIVRLPEPLDVVAHVRRLEDALIALLADLDVASYRVDGRSGVWIRGAAPDGSPRDEKVAAIGVRVAERVTMHGFALNCSNAFDAYDRIVPCGIRDAGVTSISRAIGRTVTPADVVPLLRPHLVRALSSNGSAMPATAPLSSVAGARA.

The region spanning 33–216 (GRAQDTVILL…HLVRALSSNG (184 aa)) is the BPL/LPL catalytic domain. Substrate contacts are provided by residues 71 to 78 (RGGRITWH), 146 to 148 (AIG), and 159 to 161 (GFA). Cysteine 177 acts as the Acyl-thioester intermediate in catalysis.

It belongs to the LipB family.

The protein localises to the cytoplasm. The enzyme catalyses octanoyl-[ACP] + L-lysyl-[protein] = N(6)-octanoyl-L-lysyl-[protein] + holo-[ACP] + H(+). Its pathway is protein modification; protein lipoylation via endogenous pathway; protein N(6)-(lipoyl)lysine from octanoyl-[acyl-carrier-protein]: step 1/2. Its function is as follows. Catalyzes the transfer of endogenously produced octanoic acid from octanoyl-acyl-carrier-protein onto the lipoyl domains of lipoate-dependent enzymes. Lipoyl-ACP can also act as a substrate although octanoyl-ACP is likely to be the physiological substrate. This Clavibacter michiganensis subsp. michiganensis (strain NCPPB 382) protein is Octanoyltransferase.